A 289-amino-acid chain; its full sequence is Probable porphobilinogen deaminase (289 aa).

Cys-234 carries the S-(dipyrrolylmethanemethyl)cysteine modification.

This sequence belongs to the HMBS family. Requires dipyrromethane as cofactor.

It carries out the reaction 4 porphobilinogen + H2O = hydroxymethylbilane + 4 NH4(+). The protein operates within porphyrin-containing compound metabolism; protoporphyrin-IX biosynthesis; coproporphyrinogen-III from 5-aminolevulinate: step 2/4. Tetrapolymerization of the monopyrrole PBG into the hydroxymethylbilane pre-uroporphyrinogen in several discrete steps. The sequence is that of Probable porphobilinogen deaminase (hemC) from Archaeoglobus fulgidus (strain ATCC 49558 / DSM 4304 / JCM 9628 / NBRC 100126 / VC-16).